Consider the following 249-residue polypeptide: 2,3-bisphosphoglycerate-dependent phosphoglycerate mutase (249 aa).

Substrate-binding positions include arginine 8 to asparagine 15, threonine 21 to glycine 22, arginine 60, glutamate 87 to tyrosine 90, lysine 98, arginine 114 to arginine 115, and glycine 183 to asparagine 184. Catalysis depends on histidine 9, which acts as the Tele-phosphohistidine intermediate. The active-site Proton donor/acceptor is glutamate 87.

It belongs to the phosphoglycerate mutase family. BPG-dependent PGAM subfamily.

The enzyme catalyses (2R)-2-phosphoglycerate = (2R)-3-phosphoglycerate. The protein operates within carbohydrate degradation; glycolysis; pyruvate from D-glyceraldehyde 3-phosphate: step 3/5. Catalyzes the interconversion of 2-phosphoglycerate and 3-phosphoglycerate. This chain is 2,3-bisphosphoglycerate-dependent phosphoglycerate mutase, found in Pelodictyon phaeoclathratiforme (strain DSM 5477 / BU-1).